Consider the following 483-residue polypeptide: Aspartyl/glutamyl-tRNA(Asn/Gln) amidotransferase subunit B (483 aa).

Belongs to the GatB/GatE family. GatB subfamily. Heterotrimer of A, B and C subunits.

It catalyses the reaction L-glutamyl-tRNA(Gln) + L-glutamine + ATP + H2O = L-glutaminyl-tRNA(Gln) + L-glutamate + ADP + phosphate + H(+). It carries out the reaction L-aspartyl-tRNA(Asn) + L-glutamine + ATP + H2O = L-asparaginyl-tRNA(Asn) + L-glutamate + ADP + phosphate + 2 H(+). Allows the formation of correctly charged Asn-tRNA(Asn) or Gln-tRNA(Gln) through the transamidation of misacylated Asp-tRNA(Asn) or Glu-tRNA(Gln) in organisms which lack either or both of asparaginyl-tRNA or glutaminyl-tRNA synthetases. The reaction takes place in the presence of glutamine and ATP through an activated phospho-Asp-tRNA(Asn) or phospho-Glu-tRNA(Gln). In Rickettsia conorii (strain ATCC VR-613 / Malish 7), this protein is Aspartyl/glutamyl-tRNA(Asn/Gln) amidotransferase subunit B.